Reading from the N-terminus, the 204-residue chain is Protein G1-like5 (204 aa).

Disordered stretches follow at residues 1–45 and 157–204; these read MEFV…ESQK and RARG…GAAA. The segment covering 26–39 has biased composition (low complexity); that stretch reads TGATSASAAGASPS. The 128-residue stretch at 40-167 folds into the ALOG domain; the sequence is RYESQKRRDW…ARGVSYEKKK (128 aa). The Nuclear localization signal signature appears at 165 to 169; sequence KKKRK.

The protein belongs to the plant homeotic and developmental regulators ALOG protein family.

The protein localises to the nucleus. Functionally, probable transcription regulator that acts as a developmental regulator by promoting cell growth in response to light. The sequence is that of Protein G1-like5 (G1L5) from Oryza sativa subsp. japonica (Rice).